The sequence spans 114 residues: DNA-directed RNA polymerases II, IV and V subunit 9A (114 aa).

Residues cysteine 7, cysteine 10, cysteine 29, cysteine 32, cysteine 76, cysteine 79, cysteine 103, and cysteine 108 each contribute to the Zn(2+) site. A TFIIS-type zinc finger spans residues 72–113 (KAVRCSKCQHREAVFFQATARGEEGMTLFFVCCNPNCGHRWR).

Belongs to the archaeal RpoM/eukaryotic RPA12/RPB9/RPC11 RNA polymerase family. Component of the RNA polymerase II, IV and V complexes. Interacts with NRPD1.

Its subcellular location is the nucleus. It is found in the nucleolus. Functionally, DNA-dependent RNA polymerase catalyzes the transcription of DNA into RNA using the four ribonucleoside triphosphates as substrates. Component of RNA polymerase II which synthesizes mRNA precursors and many functional non-coding RNAs. Pol II is the central component of the basal RNA polymerase II transcription machinery. It is composed of mobile elements that move relative to each other. Component of RNA polymerases IV and V which mediate short-interfering RNAs (siRNA) accumulation and subsequent RNA-directed DNA methylation-dependent (RdDM) transcriptional gene silencing (TGS) of endogenous repeated sequences, including transposable elements. Required for RNA silencing. The protein is DNA-directed RNA polymerases II, IV and V subunit 9A (NRPB9A) of Arabidopsis thaliana (Mouse-ear cress).